A 240-amino-acid chain; its full sequence is REF/SRPP-like protein At1g67360 (240 aa).

The tract at residues 208 to 240 is disordered; sequence KEDARRKKGGDTAGKKGETTDAADGDKSSSDSE.

The protein belongs to the REF/SRPP family.

The polypeptide is REF/SRPP-like protein At1g67360 (Arabidopsis thaliana (Mouse-ear cress)).